Reading from the N-terminus, the 257-residue chain is Folate receptor alpha (257 aa).

A signal peptide spans 1-24; that stretch reads MAQRMTTQLLLLLVWVAVVGEAQT. Intrachain disulfides connect Cys-37–Cys-65, Cys-57–Cys-105, Cys-66–Cys-109, Cys-89–Cys-175, Cys-96–Cys-146, Cys-135–Cys-209, Cys-139–Cys-189, and Cys-152–Cys-169. Residue Asn-69 is glycosylated (N-linked (GlcNAc...) asparagine). Folate is bound by residues Asp-103, Tyr-107, 124–128, 157–162, and Ser-196; these read WRKER and HKGWNW. Residue Asn-161 is glycosylated (N-linked (GlcNAc...) asparagine). An N-linked (GlcNAc...) asparagine glycan is attached at Asn-201. Ser-234 is lipidated: GPI-anchor amidated serine. Residues 235 to 257 constitute a propeptide, removed in mature form; that stretch reads GAGPWAAWPFLLSLALMLLWLLS.

The protein belongs to the folate receptor family. The secreted form is derived from the membrane-bound form either by cleavage of the GPI anchor, or/and by proteolysis catalyzed by a metalloprotease. Primarily expressed in tissues of epithelial origin. Expression is increased in malignant tissues. Expressed in kidney, lung and cerebellum. Detected in placenta and thymus epithelium.

It is found in the cell membrane. Its subcellular location is the apical cell membrane. It localises to the basolateral cell membrane. The protein localises to the secreted. The protein resides in the cytoplasmic vesicle. It is found in the clathrin-coated vesicle. Its subcellular location is the endosome. Functionally, binds to folate and reduced folic acid derivatives and mediates delivery of 5-methyltetrahydrofolate and folate analogs into the interior of cells. Has high affinity for folate and folic acid analogs at neutral pH. Exposure to slightly acidic pH after receptor endocytosis triggers a conformation change that strongly reduces its affinity for folates and mediates their release. Required for normal embryonic development and normal cell proliferation. The sequence is that of Folate receptor alpha (FOLR1) from Homo sapiens (Human).